Consider the following 221-residue polypeptide: Ras-related protein Rab-27A (221 aa).

An N-acetylserine modification is found at S2. At S2 the chain carries Phosphoserine. G16 to S24 serves as a coordination point for GTP. The Effector region motif lies at F38 to F46. GTP-binding positions include D74–Q78, N133–D136, and S163–A165. The cysteines at positions 123 and 188 are disulfide-linked. Residues C219 and C221 are each lipidated (S-geranylgeranyl cysteine). A Cysteine methyl ester modification is found at C221.

Belongs to the small GTPase superfamily. Rab family. Binds SYTL1, SLAC2B, MYRIP, SYTL3, SYTL4 and SYTL5. Interacts with RPH3A and RPH3A. Binds MLPH and SYTL2. Interacts with UNC13D. Does not interact with the BLOC-3 complex (heterodimer of HPS1 and HPS4). Interacts (GDP-bound form preferentially) with DENND10. As to expression, found in all the examined tissues except in brain. Low expression was found in thymus, kidney, muscle and placenta. Detected in melanocytes, and in most tumor cell lines examined. Expressed in cytotoxic T-lymphocytes (CTL) and mast cells.

The protein resides in the membrane. The protein localises to the melanosome. It localises to the late endosome. Its subcellular location is the lysosome. The enzyme catalyses GTP + H2O = GDP + phosphate + H(+). Its activity is regulated as follows. Regulated by guanine nucleotide exchange factors (GEFs) which promote the exchange of bound GDP for free GTP, GTPase activating proteins (GAPs) which increase the GTP hydrolysis activity, and GDP dissociation inhibitors which inhibit the dissociation of the nucleotide from the GTPase. Activated by GEFs such as DENND10. Small GTPase which cycles between active GTP-bound and inactive GDP-bound states. In its active state, binds to a variety of effector proteins to regulate homeostasis of late endocytic pathway, including endosomal positioning, maturation and secretion. Plays a role in cytotoxic granule exocytosis in lymphocytes. Required for both granule maturation and granule docking and priming at the immunologic synapse. In Homo sapiens (Human), this protein is Ras-related protein Rab-27A (RAB27A).